Here is a 506-residue protein sequence, read N- to C-terminus: ATP synthase subunit alpha (506 aa).

Position 170–177 (170–177 (GDRQTGKT)) interacts with ATP.

This sequence belongs to the ATPase alpha/beta chains family. In terms of assembly, F-type ATPases have 2 components, CF(1) - the catalytic core - and CF(0) - the membrane proton channel. CF(1) has five subunits: alpha(3), beta(3), gamma(1), delta(1), epsilon(1). CF(0) has four main subunits: a(1), b(1), b'(1) and c(9-12).

Its subcellular location is the cellular thylakoid membrane. The catalysed reaction is ATP + H2O + 4 H(+)(in) = ADP + phosphate + 5 H(+)(out). Produces ATP from ADP in the presence of a proton gradient across the membrane. The alpha chain is a regulatory subunit. This chain is ATP synthase subunit alpha, found in Synechococcus sp. (strain WH7803).